The chain runs to 330 residues: Methylthioribose-1-phosphate isomerase (330 aa).

Residues 49–51 (RGA), R83, and Q179 each bind substrate. Residue D220 is the Proton donor of the active site. Substrate is bound at residue 230–231 (NK).

It belongs to the eIF-2B alpha/beta/delta subunits family. MtnA subfamily.

It catalyses the reaction 5-(methylsulfanyl)-alpha-D-ribose 1-phosphate = 5-(methylsulfanyl)-D-ribulose 1-phosphate. The protein operates within amino-acid biosynthesis; L-methionine biosynthesis via salvage pathway; L-methionine from S-methyl-5-thio-alpha-D-ribose 1-phosphate: step 1/6. Catalyzes the interconversion of methylthioribose-1-phosphate (MTR-1-P) into methylthioribulose-1-phosphate (MTRu-1-P). This is Methylthioribose-1-phosphate isomerase from Thermus thermophilus (strain ATCC 27634 / DSM 579 / HB8).